We begin with the raw amino-acid sequence, 366 residues long: tRNA-specific 2-thiouridylase MnmA (366 aa).

ATP contacts are provided by residues 6 to 13 (AMSGGVDS) and leucine 32. The active-site Nucleophile is cysteine 101. A disulfide bond links cysteine 101 and cysteine 198. Residue glycine 125 coordinates ATP. An interaction with tRNA region spans residues 148 to 150 (KDQ). Cysteine 198 functions as the Cysteine persulfide intermediate in the catalytic mechanism.

It belongs to the MnmA/TRMU family.

Its subcellular location is the cytoplasm. The catalysed reaction is S-sulfanyl-L-cysteinyl-[protein] + uridine(34) in tRNA + AH2 + ATP = 2-thiouridine(34) in tRNA + L-cysteinyl-[protein] + A + AMP + diphosphate + H(+). In terms of biological role, catalyzes the 2-thiolation of uridine at the wobble position (U34) of tRNA, leading to the formation of s(2)U34. This is tRNA-specific 2-thiouridylase MnmA from Nocardioides sp. (strain ATCC BAA-499 / JS614).